The chain runs to 208 residues: Small ribosomal subunit protein uS4 (208 aa).

Residues 95-159 (RRIDNIVYRA…FKKLVRSNIE (65 aa)) form the S4 RNA-binding domain.

It belongs to the universal ribosomal protein uS4 family. In terms of assembly, part of the 30S ribosomal subunit. Contacts protein S5. The interaction surface between S4 and S5 is involved in control of translational fidelity.

Its function is as follows. One of the primary rRNA binding proteins, it binds directly to 16S rRNA where it nucleates assembly of the body of the 30S subunit. Functionally, with S5 and S12 plays an important role in translational accuracy. The polypeptide is Small ribosomal subunit protein uS4 (Borrelia recurrentis (strain A1)).